Reading from the N-terminus, the 61-residue chain is Temporin-SN3 (61 aa).

An N-terminal signal peptide occupies residues 1 to 22 (MFTLKKTLLLLFFLGTINLSLC). A propeptide spans 23-44 (EEERNAEEERRDGDDEMDVEVK) (removed in mature form). Lys61 carries the lysine amide modification.

The protein belongs to the frog skin active peptide (FSAP) family. Temporin subfamily. In terms of tissue distribution, expressed by the skin glands.

Its subcellular location is the secreted. Functionally, antimicrobial peptide. Active against some Gram-positive and Gram-negative bacterial strains. Active against fungus C.glabrata 090902 but not against C.albicans ATCC 12231. Shows weak hemolytic activity against human erythrocytes. The protein is Temporin-SN3 of Sylvirana spinulosa (Fine-spined frog).